The sequence spans 97 residues: Putative pterin-4-alpha-carbinolamine dehydratase (97 aa).

It belongs to the pterin-4-alpha-carbinolamine dehydratase family.

It carries out the reaction (4aS,6R)-4a-hydroxy-L-erythro-5,6,7,8-tetrahydrobiopterin = (6R)-L-erythro-6,7-dihydrobiopterin + H2O. This is Putative pterin-4-alpha-carbinolamine dehydratase from Rhizorhabdus wittichii (strain DSM 6014 / CCUG 31198 / JCM 15750 / NBRC 105917 / EY 4224 / RW1) (Sphingomonas wittichii).